The primary structure comprises 268 residues: Tryptophan synthase alpha chain (268 aa).

Active-site proton acceptor residues include E49 and D60.

This sequence belongs to the TrpA family. Tetramer of two alpha and two beta chains.

It catalyses the reaction (1S,2R)-1-C-(indol-3-yl)glycerol 3-phosphate + L-serine = D-glyceraldehyde 3-phosphate + L-tryptophan + H2O. Its pathway is amino-acid biosynthesis; L-tryptophan biosynthesis; L-tryptophan from chorismate: step 5/5. Functionally, the alpha subunit is responsible for the aldol cleavage of indoleglycerol phosphate to indole and glyceraldehyde 3-phosphate. The sequence is that of Tryptophan synthase alpha chain from Edwardsiella ictaluri (strain 93-146).